The following is a 71-amino-acid chain: Small ribosomal subunit protein bS18 (71 aa).

The protein belongs to the bacterial ribosomal protein bS18 family. Part of the 30S ribosomal subunit. Forms a tight heterodimer with protein bS6.

Its function is as follows. Binds as a heterodimer with protein bS6 to the central domain of the 16S rRNA, where it helps stabilize the platform of the 30S subunit. The polypeptide is Small ribosomal subunit protein bS18 (Nostoc punctiforme (strain ATCC 29133 / PCC 73102)).